Consider the following 688-residue polypeptide: DNA-directed RNA polymerase subunit beta' (688 aa).

4 residues coordinate Zn(2+): Cys-69, Cys-71, Cys-87, and Cys-90. Mg(2+) contacts are provided by Asp-497, Asp-499, and Asp-501.

Belongs to the RNA polymerase beta' chain family. RpoC1 subfamily. In plastids the minimal PEP RNA polymerase catalytic core is composed of four subunits: alpha, beta, beta', and beta''. When a (nuclear-encoded) sigma factor is associated with the core the holoenzyme is formed, which can initiate transcription. Mg(2+) serves as cofactor. Requires Zn(2+) as cofactor.

The protein resides in the plastid. It is found in the chloroplast. The catalysed reaction is RNA(n) + a ribonucleoside 5'-triphosphate = RNA(n+1) + diphosphate. Its function is as follows. DNA-dependent RNA polymerase catalyzes the transcription of DNA into RNA using the four ribonucleoside triphosphates as substrates. The sequence is that of DNA-directed RNA polymerase subunit beta' from Sinapis alba (White mustard).